We begin with the raw amino-acid sequence, 651 residues long: Probable Xaa-Pro aminopeptidase P (651 aa).

The Mn(2+) site is built by D448, D459, E557, and E571.

This sequence belongs to the peptidase M24B family. Mn(2+) is required as a cofactor.

It carries out the reaction Release of any N-terminal amino acid, including proline, that is linked to proline, even from a dipeptide or tripeptide.. Functionally, catalyzes the removal of a penultimate prolyl residue from the N-termini of peptides. This chain is Probable Xaa-Pro aminopeptidase P (AMPP), found in Coccidioides posadasii (strain C735) (Valley fever fungus).